A 379-amino-acid chain; its full sequence is MSNDKDSMNMSDLSTALNEEDRAGLVNALKNKLQNLAGQHSDVLENLTPPVRKRVEFLREIQNQYDEMEAKFFEERAALEAKYQKLYQPLYTKRYEIVNGVVEVEGAAEEVKSEQGEDKSAEEKGVPDFWLIALKNNEITAEEITERDEGALKYLKDIKWSRVEEPKGFKLEFFFDQNPYFKNTVLTKTYHMIDEDEPILEKALGTEIEWYPGKCLTQKILKKKPKKGSKNTKPITKTEDCESFFNFFSPPQVPDDDEDLDDDMADELQGQMEHDYDIGSTIKEKIISHAVSWFTGEAVEADDLDIEDDDDEIDEDDDEEDEEDDEDDEEEDDEDDDEEEEADQGKKSKKKSSAGHKKAGRSQLAEGQAGERPPECKQQ.

Positions V26–E80 form a coiled coil. S41 carries the post-translational modification Phosphoserine. The Nuclear export signal motif lies at L47–Q62. The Nuclear localization signal motif lies at K222–K227. The tract at residues A298–Q379 is disordered. The span at V299–A342 shows a compositional bias: acidic residues. Residues K347–G360 show a composition bias toward basic residues. The residue at position 376 (C376) is a Cysteine methyl ester. C376 carries the S-farnesyl cysteine lipid modification. A propeptide spans K377–Q379 (removed in mature form).

This sequence belongs to the nucleosome assembly protein (NAP) family. As to quaternary structure, can form homomeric and heteromeric protein complexes with NAP1;1, NAP1;3 and NAP1;4. Binds histone H2A. In terms of tissue distribution, ubiquitous.

It localises to the nucleus. It is found in the cytoplasm. May modulate chromatin structure by regulation of nucleosome assembly/disassembly. May function in nucleotide excision repair (NER). Involved in somatic homologous recombination. The protein is Nucleosome assembly protein 1;2 (NAP1;2) of Arabidopsis thaliana (Mouse-ear cress).